A 249-amino-acid chain; its full sequence is Probable transcriptional regulatory protein Tgr7_2237 (249 aa).

Belongs to the TACO1 family.

It is found in the cytoplasm. This chain is Probable transcriptional regulatory protein Tgr7_2237, found in Thioalkalivibrio sulfidiphilus (strain HL-EbGR7).